The chain runs to 209 residues: Small ribosomal subunit protein uS4 (209 aa).

The region spanning 99-164 (TRLDNVVYRM…IPRVQELKEL (66 aa)) is the S4 RNA-binding domain.

It belongs to the universal ribosomal protein uS4 family. In terms of assembly, part of the 30S ribosomal subunit. Contacts protein S5. The interaction surface between S4 and S5 is involved in control of translational fidelity.

In terms of biological role, one of the primary rRNA binding proteins, it binds directly to 16S rRNA where it nucleates assembly of the body of the 30S subunit. With S5 and S12 plays an important role in translational accuracy. In Natranaerobius thermophilus (strain ATCC BAA-1301 / DSM 18059 / JW/NM-WN-LF), this protein is Small ribosomal subunit protein uS4.